A 417-amino-acid polypeptide reads, in one-letter code: Mast cell carboxypeptidase A (417 aa).

The signal sequence occupies residues 1–15 (MRLILPVGLIATTLA). The propeptide at 16 to 109 (IAPVRFDREK…IEKQFDVKED (94 aa)) is activation peptide. The Peptidase M14 domain occupies 118–412 (KYNNWEKIVA…LAVKFIAKYI (295 aa)). 2 disulfide bridges follow: C173–C186 and C245–C268. The Zn(2+) site is built by H176 and E179. Position 304 (H304) interacts with Zn(2+). The Proton donor/acceptor role is filled by E378.

It belongs to the peptidase M14 family. Zn(2+) serves as cofactor.

Its subcellular location is the cytoplasmic vesicle. The protein localises to the secretory vesicle. It catalyses the reaction Release of a C-terminal amino acid, but little or no action with -Asp, -Glu, -Arg, -Lys or -Pro.. In Homo sapiens (Human), this protein is Mast cell carboxypeptidase A (CPA3).